The chain runs to 709 residues: Polyribonucleotide nucleotidyltransferase (709 aa).

The Mg(2+) site is built by Asp486 and Asp492. The 60-residue stretch at Pro553–Ile612 folds into the KH domain. Positions Gly622–Lys690 constitute an S1 motif domain.

It belongs to the polyribonucleotide nucleotidyltransferase family. As to quaternary structure, component of the RNA degradosome, which is a multiprotein complex involved in RNA processing and mRNA degradation. The cofactor is Mg(2+).

It localises to the cytoplasm. The catalysed reaction is RNA(n+1) + phosphate = RNA(n) + a ribonucleoside 5'-diphosphate. Its function is as follows. Involved in mRNA degradation. Catalyzes the phosphorolysis of single-stranded polyribonucleotides processively in the 3'- to 5'-direction. The chain is Polyribonucleotide nucleotidyltransferase from Photorhabdus luminescens (Xenorhabdus luminescens).